Reading from the N-terminus, the 307-residue chain is 4-hydroxythreonine-4-phosphate dehydrogenase (307 aa).

Residues histidine 126 and threonine 127 each coordinate substrate. A divalent metal cation contacts are provided by histidine 156, histidine 195, and histidine 251. Positions 259, 268, and 277 each coordinate substrate.

This sequence belongs to the PdxA family. In terms of assembly, homodimer. Requires Zn(2+) as cofactor. Mg(2+) serves as cofactor. The cofactor is Co(2+).

The protein resides in the cytoplasm. It carries out the reaction 4-(phosphooxy)-L-threonine + NAD(+) = 3-amino-2-oxopropyl phosphate + CO2 + NADH. Its pathway is cofactor biosynthesis; pyridoxine 5'-phosphate biosynthesis; pyridoxine 5'-phosphate from D-erythrose 4-phosphate: step 4/5. Its function is as follows. Catalyzes the NAD(P)-dependent oxidation of 4-(phosphooxy)-L-threonine (HTP) into 2-amino-3-oxo-4-(phosphooxy)butyric acid which spontaneously decarboxylates to form 3-amino-2-oxopropyl phosphate (AHAP). This is 4-hydroxythreonine-4-phosphate dehydrogenase from Helicobacter pylori (strain HPAG1).